The following is a 300-amino-acid chain: tRNA pseudouridine synthase B (300 aa).

D38 acts as the Nucleophile in catalysis.

The protein belongs to the pseudouridine synthase TruB family. Type 1 subfamily.

The catalysed reaction is uridine(55) in tRNA = pseudouridine(55) in tRNA. Functionally, responsible for synthesis of pseudouridine from uracil-55 in the psi GC loop of transfer RNAs. In Anaplasma phagocytophilum (strain HZ), this protein is tRNA pseudouridine synthase B.